An 822-amino-acid polypeptide reads, in one-letter code: Telomere length regulation protein TEL2 homolog (822 aa).

The tract at residues 442 to 504 (NDDEEEQPDA…ADQEKKKSAP (63 aa)) is disordered. Over residues 465–477 (VSSQSVASDPGNG) the composition is skewed to polar residues. Acidic residues predominate over residues 480–489 (SELDSDDDLT).

This sequence belongs to the TEL2 family.

Its subcellular location is the cytoplasm. It is found in the membrane. It localises to the nucleus. Regulator of the DNA damage response (DDR). Part of the TTT complex that is required to stabilize protein levels of the phosphatidylinositol 3-kinase-related protein kinase (PIKK) family proteins. Promotes assembly, stabilizes and maintains the activity of TORC complexes, which regulate cell growth and survival in response to nutrient and hormonal signals. May be involved in telomere length regulation. The protein is Telomere length regulation protein TEL2 homolog (telo2) of Danio rerio (Zebrafish).